Here is a 381-residue protein sequence, read N- to C-terminus: uncharacterized protein (381 aa).

11 helical membrane passes run 10-29, 75-93, 98-117, 130-147, 157-179, 199-221, 236-255, 262-284, 289-311, 323-340, and 355-374; these read IFFSLFGIFIFSCINAINFY, IILISLSLLIICTINLIIL, LIKINFILINFGIFSYFTSR, YLFLACIILLWAGGNLMV, TNNTIVICALLYCINILTEFLHY, IELQLLTGFVVSYITLNILWYYE, LILKYIFLTICFAIIPICYI, YFANLSLNIILLICFILLPIHGT, NILYIILIGNCLGAIFICNILIL, ALLSYFSMCSIGIYAGAL, and LFSVFAVVGSFVTYHFWYFI.

The protein resides in the cell membrane. This is an uncharacterized protein from Rickettsia prowazekii (strain Madrid E).